A 413-amino-acid chain; its full sequence is SWIRM domain-containing protein FUN19 (413 aa).

Over residues 35–51 (KASNNNNDSNKNGLNMS) the composition is skewed to low complexity. Disordered stretches follow at residues 35-55 (KASN…DYSN), 189-211 (YNDD…PLAS), and 249-271 (YSPQ…PSAS). A Phosphothreonine modification is found at threonine 194. The span at 200–211 (SSSSRLPSPLAS) shows a compositional bias: low complexity. Residues serine 207 and serine 211 each carry the phosphoserine modification. Residues 316–413 (LKIEWKGSPM…LQDSNFTKYL (98 aa)) form the SWIRM domain.

In Saccharomyces cerevisiae (strain ATCC 204508 / S288c) (Baker's yeast), this protein is SWIRM domain-containing protein FUN19 (FUN19).